The sequence spans 231 residues: 7-cyano-7-deazaguanine synthase (231 aa).

Residue 8–18 participates in ATP binding; it reads FSGGQDSTTCL. 4 residues coordinate Zn(2+): Cys-188, Cys-197, Cys-200, and Cys-203.

The protein belongs to the QueC family. The cofactor is Zn(2+).

The enzyme catalyses 7-carboxy-7-deazaguanine + NH4(+) + ATP = 7-cyano-7-deazaguanine + ADP + phosphate + H2O + H(+). The protein operates within purine metabolism; 7-cyano-7-deazaguanine biosynthesis. Catalyzes the ATP-dependent conversion of 7-carboxy-7-deazaguanine (CDG) to 7-cyano-7-deazaguanine (preQ(0)). This chain is 7-cyano-7-deazaguanine synthase, found in Citrobacter koseri (strain ATCC BAA-895 / CDC 4225-83 / SGSC4696).